The following is a 428-amino-acid chain: Serine hydroxymethyltransferase (428 aa).

(6S)-5,6,7,8-tetrahydrofolate contacts are provided by residues Leu-127 and 131–133; that span reads GHL. Residue Lys-236 is modified to N6-(pyridoxal phosphate)lysine.

It belongs to the SHMT family. As to quaternary structure, homodimer. Pyridoxal 5'-phosphate is required as a cofactor.

It localises to the cytoplasm. It carries out the reaction (6R)-5,10-methylene-5,6,7,8-tetrahydrofolate + glycine + H2O = (6S)-5,6,7,8-tetrahydrofolate + L-serine. Its pathway is one-carbon metabolism; tetrahydrofolate interconversion. It participates in amino-acid biosynthesis; glycine biosynthesis; glycine from L-serine: step 1/1. Functionally, catalyzes the reversible interconversion of serine and glycine with tetrahydrofolate (THF) serving as the one-carbon carrier. This reaction serves as the major source of one-carbon groups required for the biosynthesis of purines, thymidylate, methionine, and other important biomolecules. Also exhibits THF-independent aldolase activity toward beta-hydroxyamino acids, producing glycine and aldehydes, via a retro-aldol mechanism. The polypeptide is Serine hydroxymethyltransferase (Tropheryma whipplei (strain TW08/27) (Whipple's bacillus)).